The primary structure comprises 457 residues: Phosphomethylpyrimidine synthase (457 aa).

Residues N80, M109, Y139, H175, 195-197 (SRG), 236-239 (DSLR), and E275 each bind substrate. H279 serves as a coordination point for Zn(2+). Y302 is a substrate binding site. H343 is a binding site for Zn(2+). 3 residues coordinate [4Fe-4S] cluster: C423, C426, and C431.

The protein belongs to the ThiC family. It depends on [4Fe-4S] cluster as a cofactor.

It carries out the reaction 5-amino-1-(5-phospho-beta-D-ribosyl)imidazole + S-adenosyl-L-methionine = 4-amino-2-methyl-5-(phosphooxymethyl)pyrimidine + CO + 5'-deoxyadenosine + formate + L-methionine + 3 H(+). Its pathway is cofactor biosynthesis; thiamine diphosphate biosynthesis. Catalyzes the synthesis of the hydroxymethylpyrimidine phosphate (HMP-P) moiety of thiamine from aminoimidazole ribotide (AIR) in a radical S-adenosyl-L-methionine (SAM)-dependent reaction. The chain is Phosphomethylpyrimidine synthase from Trichormus variabilis (strain ATCC 29413 / PCC 7937) (Anabaena variabilis).